The chain runs to 1057 residues: Carbamoyl phosphate synthase large chain (1057 aa).

The tract at residues 1–401 is carboxyphosphate synthetic domain; sequence MPKNKDINTI…SLLKAIRSLE (401 aa). Positions 129, 169, 175, 176, 208, 210, 215, 241, 242, 243, 284, and 298 each coordinate ATP. One can recognise an ATP-grasp 1 domain in the interval 133–327; it reads RSLMNELDVP…IAKLAAKIAV (195 aa). Mg(2+) contacts are provided by Q284, E298, and N300. Q284, E298, and N300 together coordinate Mn(2+). The tract at residues 402–546 is oligomerization domain; sequence YGVHHLGLPN…YGTYERDNES (145 aa). The carbamoyl phosphate synthetic domain stretch occupies residues 547 to 929; sequence VVTDKEKVIV…ALFKGLTASG (383 aa). The ATP-grasp 2 domain maps to 671-861; the sequence is EALLNKIDVP…MAQLAMRAIL (191 aa). R707, R746, L748, E752, G777, V778, H779, S780, Q820, and E832 together coordinate ATP. Positions 820, 832, and 834 each coordinate Mg(2+). Residues Q820, E832, and N834 each contribute to the Mn(2+) site. In terms of domain architecture, MGS-like spans 930–1057; sequence VEVKDHGTVL…ESMSFTMKQM (128 aa). Residues 930–1057 form an allosteric domain region; sequence VEVKDHGTVL…ESMSFTMKQM (128 aa).

The protein belongs to the CarB family. As to quaternary structure, composed of two chains; the small (or glutamine) chain promotes the hydrolysis of glutamine to ammonia, which is used by the large (or ammonia) chain to synthesize carbamoyl phosphate. Tetramer of heterodimers (alpha,beta)4. Requires Mg(2+) as cofactor. Mn(2+) is required as a cofactor.

The enzyme catalyses hydrogencarbonate + L-glutamine + 2 ATP + H2O = carbamoyl phosphate + L-glutamate + 2 ADP + phosphate + 2 H(+). The catalysed reaction is hydrogencarbonate + NH4(+) + 2 ATP = carbamoyl phosphate + 2 ADP + phosphate + 2 H(+). It participates in amino-acid biosynthesis; L-arginine biosynthesis; carbamoyl phosphate from bicarbonate: step 1/1. The protein operates within pyrimidine metabolism; UMP biosynthesis via de novo pathway; (S)-dihydroorotate from bicarbonate: step 1/3. Functionally, large subunit of the glutamine-dependent carbamoyl phosphate synthetase (CPSase). CPSase catalyzes the formation of carbamoyl phosphate from the ammonia moiety of glutamine, carbonate, and phosphate donated by ATP, constituting the first step of 2 biosynthetic pathways, one leading to arginine and/or urea and the other to pyrimidine nucleotides. The large subunit (synthetase) binds the substrates ammonia (free or transferred from glutamine from the small subunit), hydrogencarbonate and ATP and carries out an ATP-coupled ligase reaction, activating hydrogencarbonate by forming carboxy phosphate which reacts with ammonia to form carbamoyl phosphate. The sequence is that of Carbamoyl phosphate synthase large chain from Staphylococcus carnosus (strain TM300).